A 392-amino-acid polypeptide reads, in one-letter code: Ceramide synthase 5 (392 aa).

Residues 1–46 are Lumenal-facing; that stretch reads MATAAQGPLSLLWGWLWSERFWLPENVSWADLEGPADGYGYPRGRH. A glycan (N-linked (GlcNAc...) asparagine) is linked at asparagine 26. A helical membrane pass occupies residues 47 to 67; it reads ILSVFPLAAGIFFVRLLFERF. Positions 75–136 are homeobox-like; the sequence is CIGIEDSGPY…RHRRNQDKPP (62 aa). The 202-residue stretch at 139-340 folds into the TLC domain; it reads TKFCESMWRF…IARIALKALI (202 aa). Transmembrane regions (helical) follow at residues 148-168, 183-203, 214-234, and 272-292; these read FTFY…SPWF, LSSG…SLMF, FLIM…SYIN, and LFVI…PFWI. Residues 299-309 carry the Last loop motif motif; that stretch reads ESWEIIGPYAS. A helical transmembrane segment spans residues 311–331; the sequence is WLLNGLLLTLQLLHVIWSYLI. Residues 332-392 lie on the Cytoplasmic side of the membrane; that stretch reads ARIALKALIR…HMGGSYWAEE (61 aa). Residues 349–392 are disordered; that stretch reads RSDVESSSEEEDVTTCTKSPCDSSSSNGANRVNGHMGGSYWAEE. The span at 362–378 shows a compositional bias: polar residues; sequence TTCTKSPCDSSSSNGAN.

Interacts with PAQR4; the interaction regulates the stability and activity of CERS5 and is inhibited in presence of ceramides. Phosphorylated at the C-terminus by CK2.

The protein resides in the endoplasmic reticulum membrane. The enzyme catalyses a sphingoid base + hexadecanoyl-CoA = an N-hexadecanoyl-sphingoid base + CoA + H(+). The catalysed reaction is sphinganine + hexadecanoyl-CoA = N-hexadecanoylsphinganine + CoA + H(+). It carries out the reaction hexadecasphinganine + hexadecanoyl-CoA = N-hexadecanoylhexadecasphinganine + CoA + H(+). It catalyses the reaction sphing-4-enine + hexadecanoyl-CoA = N-hexadecanoylsphing-4-enine + CoA + H(+). The enzyme catalyses 2-hydroxyhexadecanoyl-CoA + sphinganine = N-(2-hydroxyhexadecanoyl)-sphinganine + CoA + H(+). The catalysed reaction is sphinganine + tetradecanoyl-CoA = N-(tetradecanoyl)-sphinganine + CoA + H(+). It carries out the reaction sphinganine + octadecanoyl-CoA = N-(octadecanoyl)-sphinganine + CoA + H(+). It catalyses the reaction sphinganine + (9Z)-octadecenoyl-CoA = N-(9Z-octadecenoyl)-sphinganine + CoA + H(+). The enzyme catalyses a fatty acyl-CoA + sphing-4-enine = an N-acylsphing-4-enine + CoA + H(+). Its pathway is lipid metabolism; sphingolipid metabolism. Its activity is regulated as follows. Inhibited by fumonisin B1. Functionally, ceramide synthase that catalyzes the transfer of the acyl chain from acyl-CoA to a sphingoid base, with high selectivity toward palmitoyl-CoA (hexadecanoyl-CoA; C16:0-CoA). Can use other acyl donors, but with less efficiency. N-acylates sphinganine and sphingosine bases to form dihydroceramides and ceramides in de novo synthesis and salvage pathways, respectively. Plays a role in de novo ceramide synthesis and surfactant homeostasis in pulmonary epithelia. The sequence is that of Ceramide synthase 5 from Homo sapiens (Human).